A 473-amino-acid chain; its full sequence is Rifampicin monooxygenase (473 aa).

Thr12, Glu31, Lys32, and Arg41 together coordinate FAD. Residue Arg43 participates in rifampicin binding. FAD is bound by residues Gln98, Val122, and Thr156. Arg196 contacts rifampicin. Residue Asp276 coordinates FAD. Gly285 is a rifampicin binding site. FAD contacts are provided by Leu289 and Asn290.

It belongs to the rifampicin monooxygenase family. In terms of assembly, homodimer. FAD is required as a cofactor.

It catalyses the reaction rifampicin + NADPH + O2 = rifampicin para-naphthoquinone carboxamide + NADP(+) + H2O + H(+). The catalysed reaction is rifampicin + NADH + O2 = rifampicin para-naphthoquinone carboxamide + NAD(+) + H2O + H(+). Its function is as follows. Monooxygenase that can modify rifampicin, thereby inactivating its antibiotic activity. It constitutes a secondary rifampicin resistance factor. This chain is Rifampicin monooxygenase, found in Nocardia farcinica (strain IFM 10152).